The sequence spans 100 residues: Urease subunit gamma (100 aa).

This sequence belongs to the urease gamma subunit family. In terms of assembly, heterotrimer of UreA (gamma), UreB (beta) and UreC (alpha) subunits. Three heterotrimers associate to form the active enzyme.

The protein localises to the cytoplasm. The catalysed reaction is urea + 2 H2O + H(+) = hydrogencarbonate + 2 NH4(+). The protein operates within nitrogen metabolism; urea degradation; CO(2) and NH(3) from urea (urease route): step 1/1. This Acetivibrio thermocellus (strain ATCC 27405 / DSM 1237 / JCM 9322 / NBRC 103400 / NCIMB 10682 / NRRL B-4536 / VPI 7372) (Clostridium thermocellum) protein is Urease subunit gamma.